The chain runs to 348 residues: Protein RecA (348 aa).

65-72 provides a ligand contact to ATP; sequence GPESSGKT.

The protein belongs to the RecA family.

Its subcellular location is the cytoplasm. Functionally, can catalyze the hydrolysis of ATP in the presence of single-stranded DNA, the ATP-dependent uptake of single-stranded DNA by duplex DNA, and the ATP-dependent hybridization of homologous single-stranded DNAs. It interacts with LexA causing its activation and leading to its autocatalytic cleavage. The polypeptide is Protein RecA (Saccharophagus degradans (strain 2-40 / ATCC 43961 / DSM 17024)).